Consider the following 428-residue polypeptide: C4-dicarboxylate transport protein (428 aa).

Helical transmembrane passes span 8 to 28, 44 to 64, 76 to 96, 142 to 162, 184 to 204, 222 to 242, 289 to 309, 326 to 346, and 352 to 372; these read SLYF…HFYP, LIKM…IAGM, VALL…LVIV, IGAF…LFGF, VIFG…FGAM, LIVC…GSIA, VVGL…SIYL, IFHQ…AAGV, and IVLA…LALI.

The protein belongs to the dicarboxylate/amino acid:cation symporter (DAACS) (TC 2.A.23) family.

Its subcellular location is the cell inner membrane. Functionally, responsible for the transport of dicarboxylates such as succinate, fumarate, and malate from the periplasm across the membrane. The protein is C4-dicarboxylate transport protein of Cronobacter sakazakii (strain ATCC BAA-894) (Enterobacter sakazakii).